The primary structure comprises 315 residues: MEEMSGESVVTSAVPAAATRTTSFKGASPSSKYVKLNVGGALYYTTMQTLTKQDTMLKAMFSGRMEVLTDSEGWILIDRCGKHFGTILNYLRDGAVPLPESRREIEELLAEAKYYLVQGLLEECQAALQNKDTYEPFCKVPVITSSKEEQRLIATSDKPAVKLLYNRSNNKYSYTSNSDDNMLKNIELFDKLSLRFNGRVLFIKDVIGDEICCWSFYGQGRKIAEVCCTSIVYATEKKQTKVEFPEARIYEETLNILLYEAQDGRGPDNALLEATGGAAGRSHHLDEDEERERERIERVRRIHIKRPDDRAHLHQ.

Residue methionine 1 is modified to N-acetylmethionine. Position 23 is a phosphoserine (serine 23). Residues 32–100 (KYVKLNVGGA…LRDGAVPLPE (69 aa)) form the BTB domain. The Interaction with PCNA motif lies at 239–245 (QTKVEFP). Residues 269 to 294 (NALLEATGGAAGRSHHLDEDEERERE) are disordered.

Belongs to the BACURD family. As to quaternary structure, homotetramer; forms a two-fold symmetric tetramer in solution. Interacts with CUL3; interaction is direct and forms a 5:5 heterodecamer. Component of the BCR(BACURD3) E3 ubiquitin ligase complex, at least composed of CUL3, KCTD10/BACURD3 and RBX1. Interacts with DNA polymerase delta subunit 2/POLD2. Interacts with PCNA. Expressed at highest levels in lung. Also detected in testis and heart. Very low expression, if any, in brain, liver, spleen, kidney and skeletal muscle.

Its subcellular location is the nucleus. It participates in protein modification; protein ubiquitination. Its function is as follows. Substrate-specific adapter of a BCR (BTB-CUL3-RBX1) E3 ubiquitin-protein ligase complex. The BCR(BACURD3) E3 ubiquitin ligase complex mediates the ubiquitination of target proteins, leading to their degradation by the proteasome. The chain is BTB/POZ domain-containing adapter for CUL3-mediated RhoA degradation protein 3 (Kctd10) from Rattus norvegicus (Rat).